Reading from the N-terminus, the 474-residue chain is Shugoshin-1 (474 aa).

Disordered stretches follow at residues 1-53, 189-226, 322-356, and 422-442; these read MTST…KPNA, VESQ…NQGS, NSKQ…RCSK, and VSME…RKSN. Polar residues-rich tracts occupy residues 12 to 22 and 190 to 201; these read GSLNPPHSNPS and ESQSAVSSNTVC. The segment covering 211–220 has biased composition (basic residues); the sequence is KRMPQRRRSS. Polar residues-rich tracts occupy residues 322 to 341 and 422 to 431; these read NSKQ…NTVD and VSMEQRTNQE.

This sequence belongs to the shugoshin family. As to expression, highly expressed in tissues containing meiocytes. Expressed at much lower level in leaves and pollen-containing flowers.

The protein localises to the nucleus. Its subcellular location is the chromosome. It is found in the centromere. Plays a central role in chromosome cohesion during meiosis I by preventing premature dissociation of cohesin complex from centromeres after prophase, when most of cohesin complex dissociates from chromosomes arms. Required for maintenance of centromeric cohesion before prophase II and correct segregation of chromatids during meiosis II. Has apparently no function in mitosis. The chain is Shugoshin-1 from Zea mays (Maize).